We begin with the raw amino-acid sequence, 360 residues long: Uroporphyrinogen decarboxylase (360 aa).

Substrate is bound by residues 27-31, F46, D77, Y154, T209, and H327; that span reads RQSGR.

The protein belongs to the uroporphyrinogen decarboxylase family. As to quaternary structure, homodimer.

The protein localises to the cytoplasm. It carries out the reaction uroporphyrinogen III + 4 H(+) = coproporphyrinogen III + 4 CO2. It functions in the pathway porphyrin-containing compound metabolism; protoporphyrin-IX biosynthesis; coproporphyrinogen-III from 5-aminolevulinate: step 4/4. Catalyzes the decarboxylation of four acetate groups of uroporphyrinogen-III to yield coproporphyrinogen-III. The protein is Uroporphyrinogen decarboxylase of Wigglesworthia glossinidia brevipalpis.